The following is a 261-amino-acid chain: Indole-3-glycerol phosphate synthase (261 aa).

Belongs to the TrpC family.

It catalyses the reaction 1-(2-carboxyphenylamino)-1-deoxy-D-ribulose 5-phosphate + H(+) = (1S,2R)-1-C-(indol-3-yl)glycerol 3-phosphate + CO2 + H2O. Its pathway is amino-acid biosynthesis; L-tryptophan biosynthesis; L-tryptophan from chorismate: step 4/5. This is Indole-3-glycerol phosphate synthase from Burkholderia thailandensis (strain ATCC 700388 / DSM 13276 / CCUG 48851 / CIP 106301 / E264).